The following is a 315-amino-acid chain: MKHLLTAADLSREDATAILDNADRFREALVGREVKKLPTLRGRTIITMFYENSTRTRVSFEVAGKWMSADVINVSSSGSSVAKGESLRDTALTLRAAGADALIIRHPASGAAQQLAAWTLDEHGGPSIINAGDGTHEHPTQALLDALTIRQRLGSVEGKRVVIVGDVLHSRVARSNVALLHTLGAEVVLVAPPTLLPVGVADWPVTVSQDIDAELPLADAVLMLRVQAERMNGGFFPSSREYSVRYGLSEKRQSRLAEHAVVLHPGPMLRGMEIAYSVADSSQSAVLQQVSNGVHVRMAVLFHLLVGSEQEAISA.

Arg-55 and Thr-56 together coordinate carbamoyl phosphate. Lys-83 provides a ligand contact to L-aspartate. Carbamoyl phosphate is bound by residues Arg-105, His-138, and Gln-141. Arg-171 and Arg-225 together coordinate L-aspartate. Carbamoyl phosphate-binding residues include Gly-266 and Pro-267.

This sequence belongs to the aspartate/ornithine carbamoyltransferase superfamily. ATCase family. Heterododecamer (2C3:3R2) of six catalytic PyrB chains organized as two trimers (C3), and six regulatory PyrI chains organized as three dimers (R2).

It carries out the reaction carbamoyl phosphate + L-aspartate = N-carbamoyl-L-aspartate + phosphate + H(+). The protein operates within pyrimidine metabolism; UMP biosynthesis via de novo pathway; (S)-dihydroorotate from bicarbonate: step 2/3. Its function is as follows. Catalyzes the condensation of carbamoyl phosphate and aspartate to form carbamoyl aspartate and inorganic phosphate, the committed step in the de novo pyrimidine nucleotide biosynthesis pathway. This chain is Aspartate carbamoyltransferase catalytic subunit, found in Mycolicibacterium vanbaalenii (strain DSM 7251 / JCM 13017 / BCRC 16820 / KCTC 9966 / NRRL B-24157 / PYR-1) (Mycobacterium vanbaalenii).